Here is a 142-residue protein sequence, read N- to C-terminus: 3-hydroxyacyl-[acyl-carrier-protein] dehydratase FabZ (142 aa).

His-48 is an active-site residue.

The protein belongs to the thioester dehydratase family. FabZ subfamily.

It is found in the cytoplasm. It carries out the reaction a (3R)-hydroxyacyl-[ACP] = a (2E)-enoyl-[ACP] + H2O. Involved in unsaturated fatty acids biosynthesis. Catalyzes the dehydration of short chain beta-hydroxyacyl-ACPs and long chain saturated and unsaturated beta-hydroxyacyl-ACPs. The polypeptide is 3-hydroxyacyl-[acyl-carrier-protein] dehydratase FabZ (Clostridioides difficile (strain 630) (Peptoclostridium difficile)).